A 207-amino-acid polypeptide reads, in one-letter code: Phosphoenolpyruvate guanylyltransferase (207 aa).

Threonine 137, glycine 153, and serine 156 together coordinate phosphoenolpyruvate.

The protein belongs to the CofC family.

The catalysed reaction is phosphoenolpyruvate + GTP + H(+) = enolpyruvoyl-2-diphospho-5'-guanosine + diphosphate. It functions in the pathway cofactor biosynthesis; coenzyme F420 biosynthesis. Its function is as follows. Guanylyltransferase that catalyzes the activation of phosphoenolpyruvate (PEP) as enolpyruvoyl-2-diphospho-5'-guanosine, via the condensation of PEP with GTP. It is involved in the biosynthesis of coenzyme F420, a hydride carrier cofactor. The polypeptide is Phosphoenolpyruvate guanylyltransferase (Sphaerobacter thermophilus (strain ATCC 49802 / DSM 20745 / KCCM 41009 / NCIMB 13125 / S 6022)).